The sequence spans 507 residues: Maturase K (507 aa).

The protein belongs to the intron maturase 2 family. MatK subfamily.

The protein resides in the plastid. It localises to the chloroplast. Its function is as follows. Usually encoded in the trnK tRNA gene intron. Probably assists in splicing its own and other chloroplast group II introns. The chain is Maturase K from Ranunculus repens (Creeping buttercup).